A 259-amino-acid polypeptide reads, in one-letter code: Complement factor D (259 aa).

The first 21 residues, 1-21 (MADRSLHLVVLILLGTALCAA), serve as a signal peptide directing secretion. The propeptide at 22–26 (QPRGR) is activation peptide. A Peptidase S1 domain is found at 27–254 (ILRGQEAPSH…YVAWIDGVMA (228 aa)). Cys-52 and Cys-68 are joined by a disulfide. Catalysis depends on charge relay system residues His-67 and Asp-115. 3 disulfide bridges follow: Cys-149-Cys-215, Cys-180-Cys-196, and Cys-205-Cys-230. Ser-209 acts as the Charge relay system in catalysis. Positions 224–228 (TSGSR) are self-inhibitor loop.

Belongs to the peptidase S1 family. In terms of processing, CFD is activated by the removal of 5 residues at the N-terminus, named activation peptide, by the MASP-3 isoform of MASP1.

Its subcellular location is the secreted. It catalyses the reaction Selective cleavage of Arg-|-Lys bond in complement factor B when in complex with complement subcomponent C3b or with cobra venom factor.. Circulates in plasma in a mature but self-inhibited form. Activated by factor B (CFB), which displaces the self-inhibition loop. Associates with CFB complexed with complement C3b. Functionally, serine protease that initiates the alternative pathway of the complement system, a cascade of proteins that leads to phagocytosis and breakdown of pathogens and signaling that strengthens the adaptive immune system. In contrast to other complement pathways (classical, lectin and GZMK) that are directly activated by pathogens or antigen-antibody complexes, the alternative complement pathway is initiated by the spontaneous hydrolysis of complement C3. The alternative complement pathway acts as an amplification loop that enhances complement activation by mediating the formation of C3 and C5 convertases. Activated CFD cleaves factor B (CFB) when the latter is complexed with complement C3b, activating the C3 convertase of the alternative pathway. This is Complement factor D (CFD) from Bos taurus (Bovine).